The sequence spans 208 residues: Small ribosomal subunit protein uS4 (208 aa).

Positions serine 98–glutamate 178 constitute an S4 RNA-binding domain.

This sequence belongs to the universal ribosomal protein uS4 family. Part of the 30S ribosomal subunit. Contacts protein S5. The interaction surface between S4 and S5 is involved in control of translational fidelity.

One of the primary rRNA binding proteins, it binds directly to 16S rRNA where it nucleates assembly of the body of the 30S subunit. Its function is as follows. With S5 and S12 plays an important role in translational accuracy. The protein is Small ribosomal subunit protein uS4 of Acetivibrio thermocellus (strain ATCC 27405 / DSM 1237 / JCM 9322 / NBRC 103400 / NCIMB 10682 / NRRL B-4536 / VPI 7372) (Clostridium thermocellum).